The chain runs to 132 residues: Phosphomevalonate dehydratase small subunit (132 aa).

The active-site Proton acceptor is the S61.

This sequence belongs to the AcnX type II small subunit family. Heterodimer composed of a large subunit (PMDh-L) and a small subunit (PMDh-S).

It carries out the reaction (R)-5-phosphomevalonate = (2E)-3-methyl-5-phosphooxypent-2-enoate + H2O. Its pathway is isoprenoid biosynthesis; isopentenyl diphosphate biosynthesis via mevalonate pathway. Component of a hydro-lyase that catalyzes the dehydration of mevalonate 5-phosphate (MVA5P) to form trans-anhydromevalonate 5-phosphate (tAHMP). Involved in the archaeal mevalonate (MVA) pathway, which provides fundamental precursors for isoprenoid biosynthesis, such as isopentenyl diphosphate (IPP) and dimethylallyl diphosphate (DMAPP). This Archaeoglobus fulgidus (strain ATCC 49558 / DSM 4304 / JCM 9628 / NBRC 100126 / VC-16) protein is Phosphomevalonate dehydratase small subunit.